Reading from the N-terminus, the 157-residue chain is 2-C-methyl-D-erythritol 2,4-cyclodiphosphate synthase (157 aa).

2 residues coordinate a divalent metal cation: D8 and H10. 4-CDP-2-C-methyl-D-erythritol 2-phosphate-binding positions include 8 to 10 (DVH) and 34 to 35 (HS). H42 contacts a divalent metal cation. 4-CDP-2-C-methyl-D-erythritol 2-phosphate-binding positions include 56-58 (DIG), 132-135 (TTNE), and R142.

The protein belongs to the IspF family. As to quaternary structure, homotrimer. It depends on a divalent metal cation as a cofactor.

It catalyses the reaction 4-CDP-2-C-methyl-D-erythritol 2-phosphate = 2-C-methyl-D-erythritol 2,4-cyclic diphosphate + CMP. The protein operates within isoprenoid biosynthesis; isopentenyl diphosphate biosynthesis via DXP pathway; isopentenyl diphosphate from 1-deoxy-D-xylulose 5-phosphate: step 4/6. Functionally, involved in the biosynthesis of isopentenyl diphosphate (IPP) and dimethylallyl diphosphate (DMAPP), two major building blocks of isoprenoid compounds. Catalyzes the conversion of 4-diphosphocytidyl-2-C-methyl-D-erythritol 2-phosphate (CDP-ME2P) to 2-C-methyl-D-erythritol 2,4-cyclodiphosphate (ME-CPP) with a corresponding release of cytidine 5-monophosphate (CMP). This is 2-C-methyl-D-erythritol 2,4-cyclodiphosphate synthase from Chlorobium luteolum (strain DSM 273 / BCRC 81028 / 2530) (Pelodictyon luteolum).